Consider the following 300-residue polypeptide: Probable endonuclease 4 (300 aa).

9 residues coordinate Zn(2+): His-69, His-110, Glu-145, Asp-179, His-182, His-214, Asp-227, His-229, and Glu-259.

It belongs to the AP endonuclease 2 family. Zn(2+) is required as a cofactor.

The catalysed reaction is Endonucleolytic cleavage to 5'-phosphooligonucleotide end-products.. Endonuclease IV plays a role in DNA repair. It cleaves phosphodiester bonds at apurinic or apyrimidinic (AP) sites, generating a 3'-hydroxyl group and a 5'-terminal sugar phosphate. This chain is Probable endonuclease 4, found in Lachnoclostridium phytofermentans (strain ATCC 700394 / DSM 18823 / ISDg) (Clostridium phytofermentans).